The following is a 503-amino-acid chain: Angiopoietin-4 (503 aa).

The N-terminal stretch at 1-24 (MLSQLAMLQGSLLLVVATMSVAQQ) is a signal peptide. Residues 84-238 (TQQVKQLEQA…RQSAALTNIE (155 aa)) adopt a coiled-coil conformation. N96, N126, N140, N158, N247, N274, N311, N337, and N427 each carry an N-linked (GlcNAc...) asparagine glycan. The 221-residue stretch at 282-502 (MAGEQVFQDC…ASRMMIRPLD (221 aa)) folds into the Fibrinogen C-terminal domain. C291 and C320 form a disulfide bridge. A disulfide bridge connects residues C444 and C457.

Homodimer; disulfide-linked. Interacts with TEK/TIE2. In terms of tissue distribution, highly expressed in the lung with much lower levels found in other tissues.

The protein resides in the secreted. In terms of biological role, binds to TEK/TIE2, modulating ANGPT1 signaling. Can induce tyrosine phosphorylation of TEK/TIE2. Promotes endothelial cell survival, migration and angiogenesis. The protein is Angiopoietin-4 (ANGPT4) of Homo sapiens (Human).